The primary structure comprises 423 residues: Putative protein phosphatase 2C 50 (423 aa).

In terms of domain architecture, PPM-type phosphatase spans 52–380 (IFAFPFPTGT…DNMAAVVVPL (329 aa)). Positions 74, 75, 320, and 371 each coordinate Mn(2+).

This sequence belongs to the PP2C family. Requires Mg(2+) as cofactor. Mn(2+) serves as cofactor.

The catalysed reaction is O-phospho-L-seryl-[protein] + H2O = L-seryl-[protein] + phosphate. It carries out the reaction O-phospho-L-threonyl-[protein] + H2O = L-threonyl-[protein] + phosphate. The protein is Putative protein phosphatase 2C 50 of Arabidopsis thaliana (Mouse-ear cress).